The sequence spans 252 residues: uncharacterized protein (252 aa).

The stretch at 106–140 (IQSLHARRDHLDNAVEQLKSQLSRLDSSVAILKSQ) forms a coiled coil.

This is an uncharacterized protein from Caenorhabditis elegans.